We begin with the raw amino-acid sequence, 223 residues long: MAIIMAESSYERRVKALYEKQIRMEALEGKFIKKVYKFNSNLLDVKEAVLRHQRKVGKLQKVVMERREELEKRVSFMEELAQELEATKLRNLAMKDQIKQRKMLARQRKNEIMERIHTLSKTTGTYVNHEALPARVKGVTVLRGDKRDQLIPFDLNATDAEGLDSLCQHLESLNVDVSQWQQLVSLAMDVAMEARAPITPPKEAANCKSIIEIDLTSPTSHQA.

Residues 51–116 (RHQRKVGKLQ…QRKNEIMERI (66 aa)) adopt a coiled-coil conformation.

It belongs to the SPC25 family. As to quaternary structure, component of the Ndc80 complex, which is composed of Ndc80, Nuf2 and Spc25.

It is found in the nucleus. It localises to the chromosome. The protein localises to the centromere. Its subcellular location is the kinetochore. In terms of biological role, acts as a component of the essential kinetochore-associated Ndc80 complex, which is required for chromosome segregation and spindle checkpoint activity during meiosis and mitosis. Required for kinetochore integrity and the organization of stable microtubule binding sites in the outer plate of the kinetochore. Participates in SAC signaling that responds specifically to disruptions in spindle microtubule dynamics. The NDC80 complex synergistically enhances the affinity of the SKA1 complex for microtubules and may allow the NDC80 complex to track depolymerizing microtubules. The protein is Kinetochore protein Spc25 of Drosophila yakuba (Fruit fly).